The sequence spans 700 residues: Transketolase (700 aa).

Residue Thr-2 is modified to N-acetylthreonine. Substrate is bound at residue His-45. Residues Thr-48, His-85, 133-135, and Leu-135 each bind thiamine diphosphate; that span reads GPL. Asp-177 contributes to the Mg(2+) binding site. Residues Gly-178 and Asn-207 each coordinate thiamine diphosphate. Mg(2+) contacts are provided by Asn-207 and Ile-209. His-283, Arg-378, and Ser-405 together coordinate substrate. Residue His-283 participates in thiamine diphosphate binding. Catalysis depends on Glu-441, which acts as the Proton donor. Phe-467 is a binding site for thiamine diphosphate. 3 residues coordinate substrate: His-491, Asp-499, and Arg-552.

The protein belongs to the transketolase family. In terms of assembly, homodimer. It depends on Mg(2+) as a cofactor. Ca(2+) serves as cofactor. Mn(2+) is required as a cofactor. The cofactor is Co(2+). Requires thiamine diphosphate as cofactor.

The enzyme catalyses D-sedoheptulose 7-phosphate + D-glyceraldehyde 3-phosphate = aldehydo-D-ribose 5-phosphate + D-xylulose 5-phosphate. In terms of biological role, catalyzes the reversible transfer of a two-carbon ketol group from sedoheptulose-7-phosphate to glyceraldehyde-3-phosphate, producing xylulose-5-phosphate and ribose-5-phosphate. Catalyzes the transfer of a two-carbon ketol group from a ketose donor to an aldose acceptor, via a covalent intermediate with the cofactor thiamine pyrophosphate. This Mycobacterium tuberculosis (strain ATCC 25618 / H37Rv) protein is Transketolase (tkt).